Reading from the N-terminus, the 150-residue chain is 3-hydroxyacyl-[acyl-carrier-protein] dehydratase FabZ (150 aa).

Residue H56 is part of the active site.

This sequence belongs to the thioester dehydratase family. FabZ subfamily.

The protein resides in the cytoplasm. The enzyme catalyses a (3R)-hydroxyacyl-[ACP] = a (2E)-enoyl-[ACP] + H2O. Functionally, involved in unsaturated fatty acids biosynthesis. Catalyzes the dehydration of short chain beta-hydroxyacyl-ACPs and long chain saturated and unsaturated beta-hydroxyacyl-ACPs. The polypeptide is 3-hydroxyacyl-[acyl-carrier-protein] dehydratase FabZ (Desulfotalea psychrophila (strain LSv54 / DSM 12343)).